We begin with the raw amino-acid sequence, 4625 residues long: Dynein-1-alpha heavy chain, flagellar inner arm I1 complex (4625 aa).

The tract at residues 1–1919 (MDRRLEWVKE…LIRQCTGLFK (1919 aa)) is stem. Residues 70–84 (EQAPEAEDGEGEEHD) are compositionally biased toward acidic residues. The disordered stretch occupies residues 70 to 163 (EQAPEAEDGE…DEPPAPPAPK (94 aa)). Low complexity predominate over residues 111-140 (EDAPAAAAEANGANPEDEAAAPADGAADGA). The span at 144-155 (GGEEGDGAEGDE) shows a compositional bias: acidic residues. 960–967 (AGTNSGKS) is an ATP binding site. Coiled coils occupy residues 1227–1259 (EELKQVLNTVNTIRGESMVMELRYADLEERYRT) and 1339–1409 (TVEL…AVRQ). AAA regions lie at residues 1920-2141 (YGYE…VLVM), 2201-2437 (DVVE…RRPK), 2550-2800 (EPPA…IYEG), and 2906-3155 (NFYN…LRRY). ATP contacts are provided by residues 1958 to 1965 (GPAGTGKT), 2242 to 2249 (GQTGGGKT), 2588 to 2595 (GESGTAKS), and 2945 to 2952 (GVGGSGKQ). 2 coiled-coil regions span residues 3192-3297 (LEKL…IRSY) and 3400-3494 (KRKK…LIGD). Residues 3192-3494 (LEKLIQAAVE…ESRRDRLIGD (303 aa)) form a stalk region. 2 AAA regions span residues 3542 to 3773 (LTSD…EIAE) and 3998 to 4216 (ITRF…LIST). ATP is bound at residue 3680 to 3687 (GPEISGKT). Positions 3701–3788 (EQLLNVTLRH…KVTAAEIEET (88 aa)) form a coiled coil.

The protein belongs to the dynein heavy chain family. In terms of assembly, the I1 inner arm complex (also known as the f dynein complex) is a two-headed isoform composed of two heavy chains (1-alpha and 1-beta), three intermediate chains and three light chains. I1 occupies a specific position proximal to the first radial spoke and repeats every 96 nm along the length of the axoneme.

The protein localises to the cell projection. Its subcellular location is the cilium. It is found in the flagellum. It localises to the cytoplasm. The protein resides in the cytoskeleton. The protein localises to the flagellum axoneme. In terms of biological role, force generating protein of eukaryotic cilia and flagella. Produces force towards the minus ends of microtubules. Dynein has ATPase activity; the force-producing power stroke is thought to occur on release of ADP. Required for assembly of the I1 inner arm complex and its targeting to the appropriate axoneme location. Also required for phototaxis. The protein is Dynein-1-alpha heavy chain, flagellar inner arm I1 complex (DHC1) of Chlamydomonas reinhardtii (Chlamydomonas smithii).